Reading from the N-terminus, the 575-residue chain is Protein NRD1 (575 aa).

One can recognise a CID domain in the interval M1–D153. The segment at S225–P282 is disordered. The span at G244–N257 shows a compositional bias: basic and acidic residues. A phosphoserine mark is found at S263, S265, and S271. One can recognise an RRM domain in the interval R339–G409. Residues V468–S575 are disordered. 2 stretches are compositionally biased toward polar residues: residues K471–G482 and P491–S501. 2 stretches are compositionally biased toward low complexity: residues Q517 to Y527 and Q549 to S575.

Its subcellular location is the nucleus. Functionally, plays a role in sequence-specific regulation of nuclear pre-mRNA abundance. This Saccharomyces cerevisiae (strain ATCC 204508 / S288c) (Baker's yeast) protein is Protein NRD1 (NRD1).